The sequence spans 1229 residues: Nuclear envelope pore membrane protein POM 121C (1229 aa).

Residues 1–10 show a composition bias toward low complexity; sequence MSPAAAAAGA. Residues 1–24 form a disordered region; the sequence is MSPAAAAAGAGERRRPIASVRDGR. Residues 1 to 40 are cisternal side; it reads MSPAAAAAGAGERRRPIASVRDGRGRGCGGPAGAALLGLS. Residues 1–398 are required for targeting to the nucleus and nuclear pore complex; the sequence is MSPAAAAAGA…AITSSYSSTR (398 aa). Basic and acidic residues predominate over residues 11–24; sequence GERRRPIASVRDGR. A helical transmembrane segment spans residues 41-61; that stretch reads LVGLLLYLVPAAAALAWLAVG. The tract at residues 62 to 1229 is pore side; that stretch reads TTAAWWGLSR…QARRQHTRKK (1168 aa). Phosphoserine is present on Ser81. Disordered stretches follow at residues 90–200, 296–507, 579–747, 936–966, and 1202–1229; these read RTLF…LPDR, KKKK…LGYS, KKMQ…TAPT, PLPS…ALTP, and PSFS…TRKK. A compositionally biased stretch (pro residues) spans 155-166; that stretch reads ARPAPRSTPPSQ. Over residues 176–189 the composition is skewed to low complexity; that stretch reads PSLPTPLLRPSGRP. 5 positions are modified to phosphoserine: Ser322, Ser328, Ser348, Ser370, and Ser373. A compositionally biased stretch (polar residues) spans 374–400; sequence LTGAYTSGIPSSSRNAITSSYSSTRGI. The span at 409–422 shows a compositional bias: low complexity; the sequence is PSSSPFSSPASSRS. Composition is skewed to basic and acidic residues over residues 427-439 and 449-463; these read RPAK…ELCH and ADKE…DTTP. Residues 468 to 479 are compositionally biased toward polar residues; sequence NSNSQSTPGSSG. A compositionally biased stretch (low complexity) spans 612-629; the sequence is PPLGLSQSGPPGLLPSPS. Over residues 660 to 673 the composition is skewed to polar residues; that stretch reads QAETATKPQATSAP. 2 stretches are compositionally biased toward low complexity: residues 689-703 and 726-747; these read SPSS…SASP and SVSA…TAPT. Over residues 1219 to 1229 the composition is skewed to basic residues; sequence LQARRQHTRKK.

This sequence belongs to the POM121 family.

It is found in the nucleus. Its subcellular location is the nuclear pore complex. It localises to the nucleus membrane. The protein resides in the endoplasmic reticulum membrane. Essential component of the nuclear pore complex (NPC). The repeat-containing domain may be involved in anchoring components of the pore complex to the pore membrane. When overexpressed in cells induces the formation of cytoplasmic annulate lamellae (AL). The polypeptide is Nuclear envelope pore membrane protein POM 121C (POM121C) (Homo sapiens (Human)).